The following is a 412-amino-acid chain: Arginine biosynthesis bifunctional protein ArgJ (412 aa).

Substrate contacts are provided by T158, K184, T195, E284, N407, and S412. The active-site Nucleophile is the T195.

This sequence belongs to the ArgJ family. In terms of assembly, heterotetramer of two alpha and two beta chains.

The protein localises to the cytoplasm. It carries out the reaction N(2)-acetyl-L-ornithine + L-glutamate = N-acetyl-L-glutamate + L-ornithine. It catalyses the reaction L-glutamate + acetyl-CoA = N-acetyl-L-glutamate + CoA + H(+). It functions in the pathway amino-acid biosynthesis; L-arginine biosynthesis; L-ornithine and N-acetyl-L-glutamate from L-glutamate and N(2)-acetyl-L-ornithine (cyclic): step 1/1. It participates in amino-acid biosynthesis; L-arginine biosynthesis; N(2)-acetyl-L-ornithine from L-glutamate: step 1/4. Functionally, catalyzes two activities which are involved in the cyclic version of arginine biosynthesis: the synthesis of N-acetylglutamate from glutamate and acetyl-CoA as the acetyl donor, and of ornithine by transacetylation between N(2)-acetylornithine and glutamate. The protein is Arginine biosynthesis bifunctional protein ArgJ of Bartonella quintana (strain Toulouse) (Rochalimaea quintana).